The sequence spans 246 residues: 3-deoxy-manno-octulosonate cytidylyltransferase (246 aa).

This sequence belongs to the KdsB family. In terms of assembly, homodimer.

The protein localises to the cytoplasm. The enzyme catalyses 3-deoxy-alpha-D-manno-oct-2-ulosonate + CTP = CMP-3-deoxy-beta-D-manno-octulosonate + diphosphate. It functions in the pathway nucleotide-sugar biosynthesis; CMP-3-deoxy-D-manno-octulosonate biosynthesis; CMP-3-deoxy-D-manno-octulosonate from 3-deoxy-D-manno-octulosonate and CTP: step 1/1. Its pathway is bacterial outer membrane biogenesis; lipopolysaccharide biosynthesis. Functionally, activates KDO (a required 8-carbon sugar) for incorporation into bacterial lipopolysaccharide in Gram-negative bacteria. This chain is 3-deoxy-manno-octulosonate cytidylyltransferase (kpsU), found in Escherichia coli.